Reading from the N-terminus, the 969-residue chain is Squamosa promoter-binding-like protein 6 (969 aa).

2 disordered regions span residues 1 to 25 and 54 to 81; these read MEAARVGAQSRHLYGGGLGEPDMDR and EASGLALNSSPSSSEEAGAASVRNVNAR. Over residues 55-74 the composition is skewed to low complexity; that stretch reads ASGLALNSSPSSSEEAGAAS. The SBP-type zinc-finger motif lies at 149–226; it reads GPACQVEGCT…AGHNRRRRKT (78 aa). Residues C152, C157, C174, H177, C193, C196, H200, and C212 each contribute to the Zn(2+) site. Positions 209–225 match the Bipartite nuclear localization signal motif; sequence KRSCRRRLAGHNRRRRK. The interval 377-434 is disordered; it reads GMEGFEDGYEGSPTPAFKTTDSPNCPSWMHQDSTQSPPQTSGNSDSTSAQSLSSSNGD. Residues 393–419 are compositionally biased toward polar residues; sequence FKTTDSPNCPSWMHQDSTQSPPQTSGN. Residues 420-431 show a composition bias toward low complexity; it reads SDSTSAQSLSSS.

In terms of tissue distribution, ubiquitous.

The protein localises to the nucleus. Its function is as follows. Trans-acting factor that binds specifically to the consensus nucleotide sequence 5'-TNCGTACAA-3'. The chain is Squamosa promoter-binding-like protein 6 (SPL6) from Oryza sativa subsp. japonica (Rice).